Reading from the N-terminus, the 690-residue chain is Probable serine/threonine-protein kinase drkB (690 aa).

A signal peptide spans 1-24 (MKVQIVFFSITVFIFVLFLLSVES). The segment at 51 to 110 (DSKSSEHTTSSSSSSNSKNKGDSSSSSSNSGSSSNSIISGDSNSKDAPTTSSDSLSPATP) is disordered. The span at 57–96 (HTTSSSSSSNSKNKGDSSSSSSNSGSSSNSIISGDSNSKD) shows a compositional bias: low complexity. Residues 97–107 (APTTSSDSLSP) are compositionally biased toward polar residues. Residues Asn-134, Asn-180, Asn-220, and Asn-250 are each glycosylated (N-linked (GlcNAc...) asparagine). Residues 287-335 (TITPTPTITPTPTITPTVTPTATPSTTPSTTPTTTPSTPTPTPTKSPYS) form a disordered region. A compositionally biased stretch (low complexity) spans 296-323 (PTPTITPTVTPTATPSTTPSTTPTTTPS). The chain crosses the membrane as a helical span at residues 346-366 (IIIASSITGGLLISIFSFVFI). A Protein kinase domain is found at 391–644 (IKIGVRIGKG…EQCLEILESI (254 aa)). Residues 397–405 (IGKGNFGEV) and Lys-418 each bind ATP. The active-site Proton acceptor is the Asp-514. Positions 649–690 (FDDIPVNNNNNNNSNNNENNNENNNNSDNNNNDINYSNRVIN) are disordered. Low complexity predominate over residues 655–681 (NNNNNNNSNNNENNNENNNNSDNNNND).

The protein belongs to the protein kinase superfamily. TKL Ser/Thr protein kinase family.

The protein resides in the membrane. The catalysed reaction is L-seryl-[protein] + ATP = O-phospho-L-seryl-[protein] + ADP + H(+). It catalyses the reaction L-threonyl-[protein] + ATP = O-phospho-L-threonyl-[protein] + ADP + H(+). This Dictyostelium discoideum (Social amoeba) protein is Probable serine/threonine-protein kinase drkB (drkB).